A 131-amino-acid polypeptide reads, in one-letter code: Profilin-2 (131 aa).

The protein belongs to the profilin family. In terms of assembly, occurs in many kinds of cells as a complex with monomeric actin in a 1:1 ratio. Expressed in vascular bundles of roots, hypocotyls, cotyledons, leaves, sepals, petals, stamen filaments and stalks of developing seeds. Expressed in leaf epidermal cells, trichomes and stem epidermal cells. Detected in phloem exudates (at protein level).

It is found in the cytoplasm. The protein localises to the cytoskeleton. Its subcellular location is the endoplasmic reticulum. It localises to the cytosol. The protein resides in the nucleus. In terms of biological role, binds to actin monomers and regulates the organization of the actin cytoskeleton. At high concentrations, profilin prevents the polymerization of actin, whereas it enhances it at low concentrations. At low concentrations, associates with the poly-proline motif of formins to enhance actin filament elongation rate. Binds G-actin and poly-L-proline with low affinity in vitro. Binds ACT1, ACT7 and ACT11 and inhibits actin polymerization. May be involved in the cross-talk between vesicular trafficking and the actin cytoskeleton. Inhibits cell growth of various pathogenic fungal strains. May play a role as antifungal proteins in the defense system against fungal pathogen attacks. The chain is Profilin-2 from Arabidopsis thaliana (Mouse-ear cress).